The following is a 476-amino-acid chain: MSAKTGTSKTLYEKVYDAHVAVAAEGENPILYIDRHLVHEVTSPQAFDGLREKGRKVRQIGKTFATMDHNVSTQTKDINASGEMARIQMETLAKNCKEFGVTLYDLNHKYQGIVHVIGPELGITLPGMTIVCGDSHTATHGAFGSLAFGIGTSEVEHVLATQTLKQSLAKTMKIEVVGKVAEGITAKDIVLAIIGKTTAAGGTGYVVEFCGEAITDLTMEGRMTVCNMAIELGAKAGLIAPDQTTYDYIKDRKFSPTGANFDAAVEYWSTLKTDDGATFDAVVTLDAKNIKPQVTWGTNPGQVIAIDELIPGPDNFSEQVDKTSAEKALAYMGLEAGKKLSDFDIDKVFIGSCTNSRIEDMRAAAAIAKGRKVAANVQALVVPGSEQVKAQAEKEGLDKIFIEAGFEWRLPGCSMCLAMNNDRLGPKERCASTSNRNFEGRQGRDGRTHLVSPAMAAAAACAGHFVDIRDLDNATA.

3 residues coordinate [4Fe-4S] cluster: Cys353, Cys413, and Cys416.

It belongs to the aconitase/IPM isomerase family. LeuC type 1 subfamily. Heterodimer of LeuC and LeuD. It depends on [4Fe-4S] cluster as a cofactor.

It catalyses the reaction (2R,3S)-3-isopropylmalate = (2S)-2-isopropylmalate. The protein operates within amino-acid biosynthesis; L-leucine biosynthesis; L-leucine from 3-methyl-2-oxobutanoate: step 2/4. In terms of biological role, catalyzes the isomerization between 2-isopropylmalate and 3-isopropylmalate, via the formation of 2-isopropylmaleate. The chain is 3-isopropylmalate dehydratase large subunit from Photobacterium profundum (strain SS9).